Consider the following 352-residue polypeptide: C-C chemokine receptor type 5 (352 aa).

Over Met1–Ala30 the chain is Extracellular. Tyr3 carries the sulfotyrosine modification. 2 O-linked (GalNAc...) serine glycosylation sites follow: Ser6 and Ser7. Sulfotyrosine is present on residues Tyr10 and Tyr14. Cystine bridges form between Cys20-Cys269 and Cys101-Cys178. The chain crosses the membrane as a helical span at residues Arg31–Cys58. Residues Lys59 to Tyr68 lie on the Cytoplasmic side of the membrane. A helical membrane pass occupies residues Leu69 to Tyr89. Residues Ala90 to Gln102 lie on the Extracellular side of the membrane. Residues Leu103–Ile124 form a helical membrane-spanning segment. At Asp125 to Thr141 the chain is on the cytoplasmic side. The helical transmembrane segment at Val142–Phe166 threads the bilayer. Over Thr167 to Ile198 the chain is Extracellular. Residues Val199 to Leu218 form a helical membrane-spanning segment. Over Lys219–Arg235 the chain is Cytoplasmic. The helical transmembrane segment at Leu236–Phe260 threads the bilayer. Topologically, residues Gln261–Gln277 are extracellular. The chain crosses the membrane as a helical span at residues Ala278–Gly301. Residues Glu302–Leu352 lie on the Cytoplasmic side of the membrane. Residues Cys321, Cys323, and Cys324 are each lipidated (S-palmitoyl cysteine). Phosphoserine; by BARK1 occurs at positions 336, 337, 342, and 349.

It belongs to the G-protein coupled receptor 1 family. Interacts with PRAF2. Efficient ligand binding to CCL3/MIP-1alpha and CCL4/MIP-1beta requires sulfation, O-glycosylation and sialic acid modifications. Glycosylation on Ser-6 is required for efficient binding of CCL4. Interacts with GRK2. Interacts with ARRB1 and ARRB2. Interacts with CNIH4. Interacts with S100A4; this interaction stimulates T-lymphocyte chemotaxis. Post-translationally, sulfated on at least 2 of the N-terminal tyrosines. Sulfation is required for efficient binding of the chemokines, CCL3 and CCL4. Palmitoylation in the C-terminal is important for cell surface expression. In terms of processing, phosphorylation on serine residues in the C-terminal is stimulated by binding CC chemokines especially by APO-RANTES. Post-translationally, O-glycosylated, but not N-glycosylated. Ser-6 appears to be the major site even if Ser-7 may be also O-glycosylated. Also sialylated glycans present which contribute to chemokine binding. Thr-16 and Ser-17 may also be glycosylated and, if so, with small moieties such as a T-antigen.

It localises to the cell membrane. Functionally, receptor for a number of inflammatory CC-chemokines including CCL3/MIP-1-alpha, CCL4/MIP-1-beta and RANTES and subsequently transduces a signal by increasing the intracellular calcium ion level. May play a role in the control of granulocytic lineage proliferation or differentiation. Participates in T-lymphocyte migration to the infection site by acting as a chemotactic receptor. The polypeptide is C-C chemokine receptor type 5 (CCR5) (Nomascus leucogenys (Northern white-cheeked gibbon)).